The sequence spans 290 residues: UPF0761 membrane protein YihY (290 aa).

6 consecutive transmembrane segments (helical) span residues L44–F64, V104–L124, F140–I160, I183–I203, A210–L230, and V244–L264.

Belongs to the UPF0761 family.

Its subcellular location is the cell inner membrane. The polypeptide is UPF0761 membrane protein YihY (Escherichia coli O127:H6 (strain E2348/69 / EPEC)).